The following is a 178-amino-acid chain: MLRDKFIHYFQQWRERQLSRGEHWLAQHLAGRSPREKGMLLAAVVFLFSVGYYVLIWQPLSERIEQQETILQQLVAMNTRLKNAAPDIIAARKSATTTPAQVSRVISDSASAHSVVIRRIADRGENIQVWIEPVVFNDLLKWLNALDEKYALRVTQIDVSAAEKPGMVNVQRLEFGRG.

Topologically, residues 1 to 39 (MLRDKFIHYFQQWRERQLSRGEHWLAQHLAGRSPREKGM) are cytoplasmic. Residues 40 to 60 (LLAAVVFLFSVGYYVLIWQPL) traverse the membrane as a helical segment. Over 61–178 (SERIEQQETI…NVQRLEFGRG (118 aa)) the chain is Periplasmic.

The protein belongs to the GSP M family.

It localises to the cell inner membrane. Involved in a type II secretion system (T2SS, formerly general secretion pathway, GSP) for the export of folded proteins across the outer membrane. The sequence is that of Putative type II secretion system M-type protein YghD (yghD) from Escherichia coli (strain K12).